The primary structure comprises 298 residues: Syntaxin-4 (298 aa).

Topologically, residues 1–274 (MRDRTHELRQ…NQKKARKKKV (274 aa)) are cytoplasmic. Phosphoserine is present on residues Ser15, Ser29, Ser36, Ser117, Ser208, and Ser248. A coiled-coil region spans residues 38-163 (DDEFFQKVQT…ERIRRQLKIT (126 aa)). Positions 154–298 (ERIRRQLKIT…VIIGITITVG (145 aa)) are interaction with CENPF. Residues 200–262 (LNEISARHSE…ERGQEHVKIA (63 aa)) enclose the t-SNARE coiled-coil homology domain. Residues 275–295 (MIAICVSVTVLILAVIIGITI) form a helical; Anchor for type IV membrane protein membrane-spanning segment. Topologically, residues 296-298 (TVG) are extracellular.

The protein belongs to the syntaxin family. In terms of assembly, interacts with STXBP6. Component of the SNARE complex composed of STX4, SNAP23 and VAMP7 that interacts with SYT7 during lysosomal exocytosis. Found in a complex with VAMP8 and SNAP23. Detected in a complex with SNAP23 and STXBP4. Interacts with VAMP2. Interacts with SNAP23 and SNAPIN. Interacts with LLGL1. Interacts (via C-terminus) with CENPF. Interacts with DOC2B. Interacts with STXBP3; excludes interaction with DOC2B and SNAP25. Interacts with STXBP4; excludes interaction with VAMP2. Interacts with STXBP5L. Expressed in the outer and inner hair cells of the cochlea.

It localises to the cell membrane. The protein resides in the cell projection. The protein localises to the neuron projection. It is found in the stereocilium. Plasma membrane t-SNARE that mediates docking of transport vesicles. Necessary for the translocation of SLC2A4 from intracellular vesicles to the plasma membrane. In neurons, recruited at neurite tips to membrane domains rich in the phospholipid 1-oleoyl-2-palmitoyl-PC (OPPC) which promotes neurite tip surface expression of the dopamine transporter SLC6A3/DAT by facilitating fusion of SLC6A3-containing transport vesicles with the plasma membrane. Together with STXB3 and VAMP2, may also play a role in docking/fusion of intracellular GLUT4-containing vesicles with the cell surface in adipocytes and in docking of synaptic vesicles at presynaptic active zones. Required for normal hearing. This chain is Syntaxin-4 (Stx4), found in Mus musculus (Mouse).